The sequence spans 216 residues: Kynurenine formamidase (216 aa).

Trp-24 is a substrate binding site. His-54, His-58, and Asp-60 together coordinate Zn(2+). His-64 acts as the Proton donor/acceptor in catalysis. Residues His-164 and Glu-176 each contribute to the Zn(2+) site.

It belongs to the Cyclase 1 superfamily. KynB family. In terms of assembly, homodimer. Requires Zn(2+) as cofactor.

It catalyses the reaction N-formyl-L-kynurenine + H2O = L-kynurenine + formate + H(+). The protein operates within amino-acid degradation; L-tryptophan degradation via kynurenine pathway; L-kynurenine from L-tryptophan: step 2/2. Catalyzes the hydrolysis of N-formyl-L-kynurenine to L-kynurenine, the second step in the kynurenine pathway of tryptophan degradation. This Erythrobacter litoralis (strain HTCC2594) protein is Kynurenine formamidase.